The chain runs to 103 residues: Large ribosomal subunit protein bL21 (103 aa).

It belongs to the bacterial ribosomal protein bL21 family. Part of the 50S ribosomal subunit. Contacts protein L20.

Functionally, this protein binds to 23S rRNA in the presence of protein L20. The polypeptide is Large ribosomal subunit protein bL21 (Caldicellulosiruptor saccharolyticus (strain ATCC 43494 / DSM 8903 / Tp8T 6331)).